Consider the following 486-residue polypeptide: E3 ubiquitin-protein ligase RNF8 (486 aa).

An FHA domain is found at 38–92; it reads VTVGRGFGVTYQLVSKICPLMISRNHCVLKQNPEGQWTIMDNKSLNGVWLNRARL. Residues 68 to 72 are required for interaction with PIWIL1; it reads QNPEG. Serine 157 is modified (phosphoserine). The segment covering 180–201 has biased composition (polar residues); it reads SCESGQSVKSQGKGEVSSTPSE. The tract at residues 180-207 is disordered; sequence SCESGQSVKSQGKGEVSSTPSENLDPKL. The RING-type zinc-finger motif lies at 404–442; the sequence is CIICSEYFIEAVTLNCAHSFCSYCINEWMKRKIECPICR.

Belongs to the RNF8 family. As to quaternary structure, homodimer. Forms a E2-E3 ubiquitin ligase complex composed of the RNF8 homodimer and a E2 heterodimer of UBE2N and UBE2V2. Interacts with class III E2s, including UBE2E1, UBE2E2, and UBE2E3 and with UBE2N. Interacts with RXRA. Interacts (via FHA domain) with phosphorylated HERC2 (via C-terminus). Interacts with PIWIL1; leading to sequester RNF8 in the cytoplasm. Interacts with WRAP53/TCAB1. Autoubiquitinated through 'Lys-48' and 'Lys-63' of ubiquitin. 'Lys-63' polyubiquitination is mediated by UBE2N. 'Lys-29'-type polyubiquitination is also observed, but it doesn't require its own functional RING-type zinc finger.

The protein localises to the nucleus. It localises to the cytoplasm. It is found in the midbody. Its subcellular location is the chromosome. The protein resides in the telomere. The enzyme catalyses S-ubiquitinyl-[E2 ubiquitin-conjugating enzyme]-L-cysteine + [acceptor protein]-L-lysine = [E2 ubiquitin-conjugating enzyme]-L-cysteine + N(6)-ubiquitinyl-[acceptor protein]-L-lysine.. It participates in protein modification; protein ubiquitination. Functionally, E3 ubiquitin-protein ligase that plays a key role in DNA damage signaling via 2 distinct roles: by mediating the 'Lys-63'-linked ubiquitination of histones H2A and H2AX and promoting the recruitment of DNA repair proteins at double-strand breaks (DSBs) sites, and by catalyzing 'Lys-48'-linked ubiquitination to remove target proteins from DNA damage sites. Following DNA DSBs, it is recruited to the sites of damage by ATM-phosphorylated MDC1 and catalyzes the 'Lys-63'-linked ubiquitination of histones H2A and H2AX, thereby promoting the formation of TP53BP1 and BRCA1 ionizing radiation-induced foci (IRIF). Also controls the recruitment of UIMC1-BRCC3 (RAP80-BRCC36) and PAXIP1/PTIP to DNA damage sites. Promotes the recruitment of NBN to DNA damage sites by catalyzing 'Lys-6'-linked ubiquitination of NBN. Also recruited at DNA interstrand cross-links (ICLs) sites and catalyzes 'Lys-63'-linked ubiquitination of histones H2A and H2AX, leading to recruitment of FAAP20 and Fanconi anemia (FA) complex, followed by interstrand cross-link repair. H2A ubiquitination also mediates the ATM-dependent transcriptional silencing at regions flanking DSBs in cis, a mechanism to avoid collision between transcription and repair intermediates. Promotes the formation of 'Lys-63'-linked polyubiquitin chains via interactions with the specific ubiquitin-conjugating UBE2N/UBC13 and ubiquitinates non-histone substrates such as PCNA. Substrates that are polyubiquitinated at 'Lys-63' are usually not targeted for degradation. Also catalyzes the formation of 'Lys-48'-linked polyubiquitin chains via interaction with the ubiquitin-conjugating UBE2L6/UBCH8, leading to degradation of substrate proteins such as CHEK2, JMJD2A/KDM4A and KU80/XRCC5: it is still unclear how the preference toward 'Lys-48'- versus 'Lys-63'-linked ubiquitination is regulated but it could be due to RNF8 ability to interact with specific E2 specific ligases. For instance, interaction with phosphorylated HERC2 promotes the association between RNF8 and UBE2N/UBC13 and favors the specific formation of 'Lys-63'-linked ubiquitin chains. Promotes non-homologous end joining (NHEJ) by promoting the 'Lys-48'-linked ubiquitination and degradation the of KU80/XRCC5. Following DNA damage, mediates the ubiquitination and degradation of JMJD2A/KDM4A in collaboration with RNF168, leading to unmask H4K20me2 mark and promote the recruitment of TP53BP1 at DNA damage sites. Following DNA damage, mediates the ubiquitination and degradation of POLD4/p12, a subunit of DNA polymerase delta. In the absence of POLD4, DNA polymerase delta complex exhibits higher proofreading activity. In addition to its function in damage signaling, also plays a role in higher-order chromatin structure by mediating extensive chromatin decondensation. Involved in the activation of ATM by promoting histone H2B ubiquitination, which indirectly triggers histone H4 'Lys-16' acetylation (H4K16ac), establishing a chromatin environment that promotes efficient activation of ATM kinase. Required in the testis, where it plays a role in the replacement of histones during spermatogenesis. At uncapped telomeres, promotes the joining of deprotected chromosome ends by inducing H2A ubiquitination and TP53BP1 recruitment, suggesting that it may enhance cancer development by aggravating telomere-induced genome instability in case of telomeric crisis. Promotes the assembly of RAD51 at DNA DSBs in the absence of BRCA1 and TP53BP1 Also involved in class switch recombination in immune system, via its role in regulation of DSBs repair. May be required for proper exit from mitosis after spindle checkpoint activation and may regulate cytokinesis. May play a role in the regulation of RXRA-mediated transcriptional activity. Not involved in RXRA ubiquitination by UBE2E2. The chain is E3 ubiquitin-protein ligase RNF8 from Pongo abelii (Sumatran orangutan).